A 154-amino-acid chain; its full sequence is MSRLHAHKRYHGQSGSKRPLRTTKPEWAPYDKEFVENKIIELAKQGYSPAMIGLILRDQYGIPDVRLYIGKSLQDFLEEKGLLPDIPWDLIYLLKRAYRVYKHIELNPRDTQAKRNYQLIISKIHRLAKYYKRKGVLPKDWKYSIEIARLYAVQ.

The span at 1–11 (MSRLHAHKRYH) shows a compositional bias: basic residues. Positions 1–24 (MSRLHAHKRYHGQSGSKRPLRTTK) are disordered.

The protein belongs to the universal ribosomal protein uS15 family. In terms of assembly, part of the 30S ribosomal subunit.

The sequence is that of Small ribosomal subunit protein uS15 from Nanoarchaeum equitans (strain Kin4-M).